Consider the following 1202-residue polypeptide: Nitric oxide synthase 3 (1202 aa).

The segment at 1 to 70 is disordered; sequence MGNLKSVGQE…PPDGPKFPRV (70 aa). Gly-2 is lipidated: N-myristoyl glycine. 2 S-palmitoyl cysteine lipidation sites follow: Cys-15 and Cys-26. Positions 15–27 are enriched in gly residues; the sequence is CGLGLGLGLGLCG. Positions 33–65 are enriched in pro residues; it reads SPAPEPSQAPVPPSPTRPAPDHSPPLTRPPDGP. Cys-93 and Cys-98 together coordinate Zn(2+). The tract at residues 97–485 is interaction with NOSIP; sequence RCLGSLVFPR…PDPWKGSAAK (389 aa). Ser-101 is a binding site for (6R)-L-erythro-5,6,7,8-tetrahydrobiopterin. Cys-183 contributes to the heme b binding site. Residues Gln-246, Trp-355, Tyr-356, and Glu-360 each contribute to the L-arginine site. The (6R)-L-erythro-5,6,7,8-tetrahydrobiopterin site is built by Ala-445, Trp-446, and Phe-459. Tyr-474 serves as a coordination point for heme b. The segment at 489-509 is calmodulin-binding; sequence ITRKKTFKEVANAVKISASLM. The residue at position 494 (Thr-494) is a Phosphothreonine; by AMPK. One can recognise a Flavodoxin-like domain in the interval 519 to 702; that stretch reads ATILYGSETG…AFRGWAQAAF (184 aa). Residues Ser-525, Glu-526, Thr-527, Arg-529, Ser-571, and Thr-572 each coordinate FMN. 3 positions are modified to phosphoserine: Ser-614, Ser-632, and Ser-637. Positions 653, 660, 686, and 690 each coordinate FMN. The FAD-binding FR-type domain occupies 755–1001; that stretch reads RKMFQATILS…IRGAPSFRLP (247 aa). Arg-775 serves as a coordination point for NADP(+). Residue His-797 coordinates FAD. Residues 817–843 form a disordered region; it reads EDPPPSTEPVAVEQLEKGSPGGPPPGW. Ser-835 carries the phosphoserine modification. Residues Arg-937, Tyr-939, Ser-940, Thr-955, Ala-957, Tyr-961, Val-974, Cys-975, and Ser-976 each contribute to the FAD site. NADP(+) is bound by residues Thr-1015, Arg-1048, Ser-1077, Arg-1078, Lys-1084, Tyr-1086, and Gln-1088. Thr-1174 carries the post-translational modification Phosphothreonine. Ser-1176 is modified (phosphoserine; by AMPK). Ser-1178 is modified (phosphoserine).

Belongs to the NOS family. In terms of assembly, homodimer. Interacts with NOSIP and NOSTRIN. Interacts with HSP90AB1. Forms a complex with ASL, ASS1 and SLC7A1; the complex regulates cell-autonomous L-arginine synthesis and citrulline recycling while channeling extracellular L-arginine to nitric oxide synthesis pathway. Heme b serves as cofactor. The cofactor is FAD. FMN is required as a cofactor. It depends on (6R)-L-erythro-5,6,7,8-tetrahydrobiopterin as a cofactor. In terms of processing, phosphorylation by AMPK at Ser-1176 in the presence of Ca(2+)-calmodulin (CaM) activates activity. In absence of Ca(2+)-calmodulin, AMPK also phosphorylates Thr-494, resulting in inhibition of activity. In terms of tissue distribution, expressed constitutively by vascular endothelium. Detected in alveolar and serosal epithelial cells as well as in endothelial cells in one day old rat. In adult lung, detected in rare endothelial cells.

It is found in the membrane. The protein localises to the caveola. The protein resides in the cytoplasm. It localises to the cytoskeleton. Its subcellular location is the golgi apparatus. It is found in the cell membrane. It catalyses the reaction 2 L-arginine + 3 NADPH + 4 O2 + H(+) = 2 L-citrulline + 2 nitric oxide + 3 NADP(+) + 4 H2O. Stimulated by calcium/calmodulin. Inhibited by NOSIP and NOSTRIN. Produces nitric oxide (NO) which is implicated in vascular smooth muscle relaxation through a cGMP-mediated signal transduction pathway. NO mediates vascular endothelial growth factor (VEGF)-induced angiogenesis in coronary vessels and promotes blood clotting through the activation of platelets. This chain is Nitric oxide synthase 3, found in Rattus norvegicus (Rat).